We begin with the raw amino-acid sequence, 87 residues long: Cytochrome c5 (87 aa).

4 residues coordinate heme: cysteine 19, cysteine 22, histidine 23, and methionine 63. An intrachain disulfide couples cysteine 69 to cysteine 72.

The protein belongs to the cytochrome c family. As to quaternary structure, homodimer. In terms of processing, binds 1 heme group per subunit.

It is unreactive with cytochrome c reductase or oxidase but seems to function as an intermediate in nitrate respiration of facultative anaerobic pseudmonads. The sequence is that of Cytochrome c5 from Ectopseudomonas mendocina (Pseudomonas mendocina).